The following is a 317-amino-acid chain: Spermidine synthase 2 (317 aa).

The PABS domain occupies 27 to 264 (PGWFSEISPL…GMIGFMLCST (238 aa)). Gln58 provides a ligand contact to S-adenosyl 3-(methylsulfanyl)propylamine. Putrescine is bound at residue Tyr88. S-adenosyl 3-(methylsulfanyl)propylamine-binding positions include Gln89, Asp113, Glu133, 164 to 165 (DG), and Asp183. The active-site Proton acceptor is Asp183. Putrescine contacts are provided by residues 183–186 (DSSD) and Tyr252.

The protein belongs to the spermidine/spermine synthase family.

It catalyses the reaction S-adenosyl 3-(methylsulfanyl)propylamine + putrescine = S-methyl-5'-thioadenosine + spermidine + H(+). It participates in amine and polyamine biosynthesis; spermidine biosynthesis; spermidine from putrescine: step 1/1. This Datura stramonium (Jimsonweed) protein is Spermidine synthase 2.